The primary structure comprises 320 residues: MLIVGPTAVGKSDVGIAVARRFNGEIISGDSMQVYRGMDIGTAKLKQEERGGILHHMIDILDPDEPFSVADFQRRVTTLIPEIVNRGRLPILVGGTGLYVQSIIDHYEFTEEATDLELRSQLEQEADASGLEALHRRLAEVDPISAARIHVNDRKRIIRALEVYRLTGRRQSDFHYADSVRQPKYQLAPIALTMDRQELYRRIDLRARNMIESGLVEEVKGLLKGGYAPTLPSMQAIGYKEIVGYLQGEYDLARALYLLQRDTRHFAKRQYTWFRRDTRLIWFAADAMDRERLMEGIFDVVSNALGGHVERNINDGGAFR.

ATP is bound at residue 5-12 (GPTAVGKS). 7-12 (TAVGKS) lines the substrate pocket. The interaction with substrate tRNA stretch occupies residues 30–33 (DSMQ).

It belongs to the IPP transferase family. As to quaternary structure, monomer. Mg(2+) serves as cofactor.

The enzyme catalyses adenosine(37) in tRNA + dimethylallyl diphosphate = N(6)-dimethylallyladenosine(37) in tRNA + diphosphate. Its function is as follows. Catalyzes the transfer of a dimethylallyl group onto the adenine at position 37 in tRNAs that read codons beginning with uridine, leading to the formation of N6-(dimethylallyl)adenosine (i(6)A). This Heliobacterium modesticaldum (strain ATCC 51547 / Ice1) protein is tRNA dimethylallyltransferase.